The primary structure comprises 167 residues: Endoribonuclease YbeY (167 aa).

Residues histidine 132, histidine 136, and histidine 142 each coordinate Zn(2+).

It belongs to the endoribonuclease YbeY family. Zn(2+) serves as cofactor.

It localises to the cytoplasm. Functionally, single strand-specific metallo-endoribonuclease involved in late-stage 70S ribosome quality control and in maturation of the 3' terminus of the 16S rRNA. The sequence is that of Endoribonuclease YbeY from Clostridium beijerinckii (strain ATCC 51743 / NCIMB 8052) (Clostridium acetobutylicum).